The sequence spans 612 residues: Zinc metalloproteinase nas-36 (612 aa).

The N-terminal stretch at 1 to 16 (MLLLVLLFVFISATNA) is a signal peptide. A glycan (N-linked (GlcNAc...) asparagine) is linked at asparagine 15. Positions 17–122 (SDVGRRELEK…KSKPNVRGRR (106 aa)) are excised as a propeptide. Positions 123 to 320 (SFDASPESKW…IETINKAYCS (198 aa)) constitute a Peptidase M12A domain. An N-linked (GlcNAc...) asparagine glycan is attached at asparagine 163. 8 disulfide bridges follow: cysteine 166–cysteine 319, cysteine 190–cysteine 209, cysteine 329–cysteine 343, cysteine 345–cysteine 354, cysteine 365–cysteine 394, cysteine 515–cysteine 546, cysteine 519–cysteine 551, and cysteine 531–cysteine 536. A Zn(2+)-binding site is contributed by histidine 217. Residue glutamate 218 is part of the active site. Zn(2+) contacts are provided by histidine 221 and histidine 227. In terms of domain architecture, EGF-like spans 320-355 (SDRCSGSNDCKNGGYPHPKQCDTCLCPNGLSGPKCE). Residues 365 to 478 (CGGKIVVKEE…VGFKLQARAT (114 aa)) form the CUB domain. In terms of domain architecture, TSP type-1 spans 503 to 552 (TDQWAEWGSWSQCSRSCGGCGIMSRVRVCRTKQCKGRRQEFSTCNLKACP).

Requires Zn(2+) as cofactor.

It is found in the secreted. With respect to regulation, inhibited by 1,10-phenanthroline. In terms of biological role, metalloprotease. Involved in molting, a process during larval stages in which a new cuticle is formed and the old cuticle is shed. This Haemonchus contortus (Barber pole worm) protein is Zinc metalloproteinase nas-36.